A 78-amino-acid polypeptide reads, in one-letter code: Acyl carrier protein (78 aa).

The Carrier domain occupies 2–77 (SDTEERVKKI…DAVKFIDKAS (76 aa)). Residue Ser-37 is modified to O-(pantetheine 4'-phosphoryl)serine.

It belongs to the acyl carrier protein (ACP) family. 4'-phosphopantetheine is transferred from CoA to a specific serine of apo-ACP by AcpS. This modification is essential for activity because fatty acids are bound in thioester linkage to the sulfhydryl of the prosthetic group.

Its subcellular location is the cytoplasm. The protein operates within lipid metabolism; fatty acid biosynthesis. Functionally, carrier of the growing fatty acid chain in fatty acid biosynthesis. The sequence is that of Acyl carrier protein from Bartonella bacilliformis (strain ATCC 35685 / KC583 / Herrer 020/F12,63).